A 261-amino-acid polypeptide reads, in one-letter code: tRNA (guanine-N(7)-)-methyltransferase (261 aa).

Residues Glu-75, Glu-100, Asp-127, and Asp-150 each contribute to the S-adenosyl-L-methionine site. Asp-150 is an active-site residue. Lys-154 lines the substrate pocket. The interaction with RNA stretch occupies residues 156-161; it reads RHNKRR. Substrate is bound by residues Asp-186 and 223-226; that span reads THFE.

It belongs to the class I-like SAM-binding methyltransferase superfamily. TrmB family.

The enzyme catalyses guanosine(46) in tRNA + S-adenosyl-L-methionine = N(7)-methylguanosine(46) in tRNA + S-adenosyl-L-homocysteine. The protein operates within tRNA modification; N(7)-methylguanine-tRNA biosynthesis. In terms of biological role, catalyzes the formation of N(7)-methylguanine at position 46 (m7G46) in tRNA. The polypeptide is tRNA (guanine-N(7)-)-methyltransferase (Xanthomonas axonopodis pv. citri (strain 306)).